The chain runs to 285 residues: Pantothenate synthetase (285 aa).

30–37 (MGNLHRGH) serves as a coordination point for ATP. The active-site Proton donor is the histidine 37. Glutamine 61 lines the (R)-pantoate pocket. Glutamine 61 is a beta-alanine binding site. 149-152 (GRKD) is a binding site for ATP. Glutamine 155 serves as a coordination point for (R)-pantoate. ATP is bound by residues valine 178 and 186–189 (LSSR).

This sequence belongs to the pantothenate synthetase family. In terms of assembly, homodimer.

Its subcellular location is the cytoplasm. The catalysed reaction is (R)-pantoate + beta-alanine + ATP = (R)-pantothenate + AMP + diphosphate + H(+). It participates in cofactor biosynthesis; (R)-pantothenate biosynthesis; (R)-pantothenate from (R)-pantoate and beta-alanine: step 1/1. Its function is as follows. Catalyzes the condensation of pantoate with beta-alanine in an ATP-dependent reaction via a pantoyl-adenylate intermediate. This is Pantothenate synthetase from Halorhodospira halophila (strain DSM 244 / SL1) (Ectothiorhodospira halophila (strain DSM 244 / SL1)).